A 192-amino-acid chain; its full sequence is Ribose 1,5-bisphosphate phosphokinase PhnN (192 aa).

15-22 (GPSGAGKD) serves as a coordination point for ATP.

It belongs to the ribose 1,5-bisphosphokinase family.

The catalysed reaction is alpha-D-ribose 1,5-bisphosphate + ATP = 5-phospho-alpha-D-ribose 1-diphosphate + ADP. It participates in metabolic intermediate biosynthesis; 5-phospho-alpha-D-ribose 1-diphosphate biosynthesis; 5-phospho-alpha-D-ribose 1-diphosphate from D-ribose 5-phosphate (route II): step 3/3. Catalyzes the phosphorylation of ribose 1,5-bisphosphate to 5-phospho-D-ribosyl alpha-1-diphosphate (PRPP). This is Ribose 1,5-bisphosphate phosphokinase PhnN from Brucella melitensis biotype 2 (strain ATCC 23457).